The following is a 359-amino-acid chain: GTPase Obg (359 aa).

Residues 1-159 form the Obg domain; sequence MQFIDQAEIQ…RSLRLELKLL (159 aa). The OBG-type G domain occupies 160–328; the sequence is AEVGIIGLPN…LLHQIWQELE (169 aa). GTP is bound by residues 166–173, 191–195, 213–216, 280–283, and 309–311; these read GLPNAGKS, FTTLV, DIPG, NKID, and SAI. Serine 173 and threonine 193 together coordinate Mg(2+).

This sequence belongs to the TRAFAC class OBG-HflX-like GTPase superfamily. OBG GTPase family. As to quaternary structure, monomer. The cofactor is Mg(2+).

Its subcellular location is the cytoplasm. In terms of biological role, an essential GTPase which binds GTP, GDP and possibly (p)ppGpp with moderate affinity, with high nucleotide exchange rates and a fairly low GTP hydrolysis rate. Plays a role in control of the cell cycle, stress response, ribosome biogenesis and in those bacteria that undergo differentiation, in morphogenesis control. The protein is GTPase Obg of Cyanothece sp. (strain PCC 7425 / ATCC 29141).